A 575-amino-acid polypeptide reads, in one-letter code: Transcription factor coe2 (575 aa).

The interaction with DNA stretch occupies residues 63–66; that stretch reads RKSN. Residues 151 to 170 form a C5-type zinc finger; it reads CRVLLTHEVMCSRCCEKKSC. Interaction with DNA stretches follow at residues 197 to 204 and 236 to 239; these read NCLKTAGN and NNSK. The IPT/TIG domain occupies 254–336; sequence PCIKAISPSE…CKGAPGRFIY (83 aa). A disordered region spans residues 450 to 487; the sequence is IRNTSSISPRGYSSSSTPQQSNYSTPSNSMNGYSNVPM. Residues 454–476 are compositionally biased toward low complexity; it reads SSISPRGYSSSSTPQQSNYSTPS. Residues 477-487 are compositionally biased toward polar residues; it reads NSMNGYSNVPM.

The protein belongs to the COE family.

Its subcellular location is the nucleus. Functionally, may play a pivotal role in the transcriptional cascade that specifies primary neurons in embryos. Stabilizes the higher neural potential of selected progenitor cells that express neurog2/X-ngnr-1 by maintaining Delta-Notch signaling. Thus ensures the transition between neural competence and irreversible commitment to a neural fate. Also promotes neuronal differentiation by activating neurod1 expression, directly or indirectly. The protein is Transcription factor coe2 of Xenopus tropicalis (Western clawed frog).